A 1014-amino-acid polypeptide reads, in one-letter code: Pre-mRNA-processing ATP-dependent RNA helicase prp11 (1014 aa).

Residues 1–11 show a composition bias toward basic residues; that stretch reads MSRRTRSRSPP. The tract at residues 1–149 is disordered; that stretch reads MSRRTRSRSP…SRFDRTERVG (149 aa). Basic and acidic residues-rich tracts occupy residues 15 to 87 and 106 to 121; these read YNRE…EYAR and RHAEEKEVDNKTKSDE. The Q motif motif lies at 418–446; the sequence is TSWSQCGLSAQTISVINSLGYEKPTSIQA. A Helicase ATP-binding domain is found at 449–627; that stretch reads IPAITSGRDV…RKVLKKPVEI (179 aa). 462–469 is a binding site for ATP; sequence AKTGSGKT. The DEAD box signature appears at 575–578; sequence DEAD. In terms of domain architecture, Helicase C-terminal spans 638–802; sequence EVEQIVEVRP…PVPKELQTLA (165 aa). The segment at 815 to 875 is disordered; that stretch reads KAAGGGFGGK…PEKSTGDPTL (61 aa). Composition is skewed to basic and acidic residues over residues 827-838 and 855-875; these read SRLDETRNAERK and AEAKSPLEKITPEKSTGDPTL.

Belongs to the DEAD box helicase family. DDX46/PRP5 subfamily.

Its subcellular location is the nucleus. The catalysed reaction is ATP + H2O = ADP + phosphate + H(+). ATP-dependent RNA helicase involved in pre-spliceosome/complex A assembly and mRNA splicing. Bridges U1 and U2 snRNPs during pre-spliceosome assembly and enables stable U2 snRNP association with intron RNA. Through its helicase activity probably catalyzes an ATP-dependent conformational change of U2 snRNP. In Schizosaccharomyces pombe (strain 972 / ATCC 24843) (Fission yeast), this protein is Pre-mRNA-processing ATP-dependent RNA helicase prp11 (prp11).